Consider the following 294-residue polypeptide: MHPRFQTAFGQLADNLQSALAPILADEHFPAMLTAEQVSTLKRESGLDEDALAFALLPLAAACARTDLSHFNVGAIARGISGTWYFGGNMEFLGATMQQTVHAEQSAIGHAWLRGEKGLAAITVNYTPCGHCRQFMNELNSGLDLRIHLPGRVPHTLRDYLPDAFGPKDLEIKTLLMDEQDHGFALEGDALTQAAIAAANKCHMPYSYSPSGVALECKDGRIFTGSYAENAAFNPTLPPLQGALNLLNLNGYDYPDIQRAILAEKADAPLIQWDATAATLKALGCNNIDRVLLG.

CMP/dCMP-type deaminase domains are found at residues 48 to 168 and 186 to 294; these read DEDA…FGPK and LEGD…VLLG. Position 89–91 (89–91) interacts with substrate; the sequence is NME. His102 is a binding site for Zn(2+). Residue Glu104 is the Proton donor of the active site. Cys129 and Cys132 together coordinate Zn(2+).

Belongs to the cytidine and deoxycytidylate deaminase family. As to quaternary structure, homodimer. It depends on Zn(2+) as a cofactor.

It carries out the reaction cytidine + H2O + H(+) = uridine + NH4(+). The enzyme catalyses 2'-deoxycytidine + H2O + H(+) = 2'-deoxyuridine + NH4(+). Its function is as follows. This enzyme scavenges exogenous and endogenous cytidine and 2'-deoxycytidine for UMP synthesis. This is Cytidine deaminase from Citrobacter koseri (strain ATCC BAA-895 / CDC 4225-83 / SGSC4696).